The sequence spans 653 residues: Sodium-dependent phosphate transporter 2 (653 aa).

Residues 1 to 5 are Extracellular-facing; that stretch reads MAIDG. A helical transmembrane segment spans residues 6 to 26; it reads YLWMVILGFIIAFILAFSVGA. Residues 27–46 lie on the Cytoplasmic side of the membrane; sequence NDVANSFGTAVGSGVVTLRQ. A helical transmembrane segment spans residues 47 to 67; it reads ACILASIFETTGSVLLGAKVG. Residues 68-86 lie on the Extracellular side of the membrane; sequence ETIRKGIIDVNLYNETVET. N81 carries N-linked (GlcNAc...) asparagine glycosylation. Residues 87–107 form a helical membrane-spanning segment; that stretch reads LMAGEVSAMVGSAVWQLIASF. Over 108-109 the chain is Cytoplasmic; it reads LR. The chain crosses the membrane as a helical span at residues 110–130; that stretch reads LPISGTHCIVGSTIGFSLVAI. Residues 131–142 are Extracellular-facing; it reads GTQGVQWMELVK. Residues 143 to 163 form a helical membrane-spanning segment; it reads IVASWFISPLLSGFMSGVLFI. Topologically, residues 164–190 are cytoplasmic; it reads LIRIFILKKEDPVPNGLRALPVFYAAT. The chain crosses the membrane as a helical span at residues 191 to 211; that stretch reads IAINVFSIMYTGAPVLGLVLP. Over 212 to 213 the chain is Extracellular; it reads IW. The chain crosses the membrane as a helical span at residues 214–234; it reads AIALISFGVALLFALFVWLFV. Residues 235–483 are Cytoplasmic-facing; that stretch reads CPWMRRKIAG…EEKEEKDTAE (249 aa). Phosphoserine occurs at positions 253, 256, 259, and 268. Residues 275–311 form a disordered region; the sequence is PGAKANDDSTVPLTGSAGEPSGTSEGTSVGNHPRASY. Over residues 295-304 the composition is skewed to polar residues; the sequence is SGTSEGTSVG. 2 positions are modified to phosphoserine: S316 and S385. Positions 459-478 are disordered; the sequence is SELTDPDQPRDDPAEEEKEE. The helical transmembrane segment at 484–504 threads the bilayer; that stretch reads VHLLFHFLQVLTACFGSFAHG. Residues 505-531 lie on the Extracellular side of the membrane; sequence GNDVSNAIGPLVALWLIYEQGAVLQEA. A helical transmembrane segment spans residues 532–552; it reads VTPVWLLFYGGVGICTGLWVW. At 553-572 the chain is on the cytoplasmic side; it reads GRRVIQTMGKDLTPITPSSG. A helical membrane pass occupies residues 573–587; it reads FTIELASAFTVVIAS. Residues 588-594 lie on the Extracellular side of the membrane; it reads NVGLPVS. A helical transmembrane segment spans residues 595–610; it reads TTHCKVGSVVAVGWIR. Residues 611-622 are Cytoplasmic-facing; the sequence is SRKAVDWRLFRN. A helical membrane pass occupies residues 623–643; the sequence is IFVAWFVTVPVAGLFSAAIMA. Topologically, residues 644–653 are extracellular; sequence LLMYGILPYV.

The protein belongs to the inorganic phosphate transporter (PiT) (TC 2.A.20) family. In terms of assembly, homodimer.

It is found in the cell membrane. Its subcellular location is the apical cell membrane. The catalysed reaction is 2 Na(+)(out) + phosphate(out) = 2 Na(+)(in) + phosphate(in). Sodium-phosphate symporter which preferentially transports the monovalent form of phosphate with a stoichiometry of two sodium ions per phosphate ion. Plays a critical role in the determination of bone quality and strength by providing phosphate for bone mineralization. Required to maintain normal cerebrospinal fluid phosphate levels. Mediates phosphate-induced calcification of vascular smooth muscle cells (VCMCs) and can functionally compensate for loss of SLC20A1 in VCMCs. Its function is as follows. (Microbial infection) Functions as a retroviral receptor for feline leukemia virus subgroup B (FeLV-B). The polypeptide is Sodium-dependent phosphate transporter 2 (SLC20A2) (Felis catus (Cat)).